Consider the following 342-residue polypeptide: Ferredoxin--NADP reductase (342 aa).

Cys17, Asp36, Gln44, Tyr49, Ile89, Phe124, Asp289, and Thr330 together coordinate FAD.

It belongs to the ferredoxin--NADP reductase type 2 family. In terms of assembly, homodimer. Requires FAD as cofactor.

It carries out the reaction 2 reduced [2Fe-2S]-[ferredoxin] + NADP(+) + H(+) = 2 oxidized [2Fe-2S]-[ferredoxin] + NADPH. The sequence is that of Ferredoxin--NADP reductase from Rhodopseudomonas palustris (strain BisA53).